The primary structure comprises 60 residues: U1-theraphotoxin-Agm3a (60 aa).

The N-terminal stretch at 1–21 (MKFSVLVFILGLVLLLALSSA) is a signal peptide. Positions 22–29 (TEMEENAR) are excised as a propeptide. Cystine bridges form between Cys31/Cys45, Cys38/Cys50, and Cys44/Cys57.

Belongs to the neurotoxin 10 (Hwtx-1) family. 63 (VsTx1) subfamily. As to expression, expressed by the venom gland.

It is found in the secreted. Inhibits sodium channels Nav1.7/SCN9A and potassium channels Kv11.1/KCNH2. Also binds the voltage-sensor domain of the potassium channel KvAP (from the archaeon Aeropyrum pernix) with very slow apparent binding kinetics and affects channel gating. Reaches its target by dynamically partitioning into anionic or zwitterionic headgroup lipid membranes. May bind to the open state of KvAP. The sequence is that of U1-theraphotoxin-Agm3a from Acanthoscurria gomesiana (Tarantula spider).